A 316-amino-acid chain; its full sequence is Acetaldehyde dehydrogenase (316 aa).

Ser-12–Ile-15 is an NAD(+) binding site. Residue Cys-132 is the Acyl-thioester intermediate of the active site. NAD(+) is bound by residues Ser-163–Asn-171 and Asn-289.

It belongs to the acetaldehyde dehydrogenase family.

It catalyses the reaction acetaldehyde + NAD(+) + CoA = acetyl-CoA + NADH + H(+). This Bordetella avium (strain 197N) protein is Acetaldehyde dehydrogenase (bphG).